Consider the following 74-residue polypeptide: Large ribosomal subunit protein bL28 (74 aa).

The protein belongs to the bacterial ribosomal protein bL28 family.

The chain is Large ribosomal subunit protein bL28 from Buchnera aphidicola subsp. Baizongia pistaciae (strain Bp).